The chain runs to 54 residues: UPF0391 membrane protein Daro_2080 (54 aa).

The next 2 helical transmembrane spans lie at 5 to 25 (AIVF…GIAA) and 30 to 50 (IAKI…VMGF).

The protein belongs to the UPF0391 family.

Its subcellular location is the cell membrane. The chain is UPF0391 membrane protein Daro_2080 from Dechloromonas aromatica (strain RCB).